The sequence spans 82 residues: Bowman-Birk type proteinase inhibitor (82 aa).

The tract at residues 1 to 24 (SGHHDETTDEPSESSKPCCDQCSC) is disordered. 7 disulfides stabilise this stretch: C18–C72, C19–C34, C22–C68, C24–C32, C42–C49, C46–C61, and C51–C59.

It belongs to the Bowman-Birk serine protease inhibitor family.

Its function is as follows. Trypsin and chymotrypsin are inhibited simultaneously. There are two separate reactive sites for trypsin and chymotrypsin but they do not inhibit simultaneously. The chain is Bowman-Birk type proteinase inhibitor from Phaseolus angularis (Azuki bean).